A 142-amino-acid polypeptide reads, in one-letter code: Large ribosomal subunit protein uL11 (142 aa).

The protein belongs to the universal ribosomal protein uL11 family. As to quaternary structure, part of the ribosomal stalk of the 50S ribosomal subunit. Interacts with L10 and the large rRNA to form the base of the stalk. L10 forms an elongated spine to which L12 dimers bind in a sequential fashion forming a multimeric L10(L12)X complex. One or more lysine residues are methylated.

Its function is as follows. Forms part of the ribosomal stalk which helps the ribosome interact with GTP-bound translation factors. The protein is Large ribosomal subunit protein uL11 of Bartonella henselae (strain ATCC 49882 / DSM 28221 / CCUG 30454 / Houston 1) (Rochalimaea henselae).